Consider the following 192-residue polypeptide: Transcription termination/antitermination protein NusG (192 aa).

A KOW domain is found at 140–168; that stretch reads VGEIVIVTDGPFETFTGTVEEIDQEKNRL.

It belongs to the NusG family.

In terms of biological role, participates in transcription elongation, termination and antitermination. The polypeptide is Transcription termination/antitermination protein NusG (Rickettsia felis (strain ATCC VR-1525 / URRWXCal2) (Rickettsia azadi)).